Here is a 241-residue protein sequence, read N- to C-terminus: RecQ-mediated genome instability protein 1 (241 aa).

This sequence belongs to the RMI1 family. As to quaternary structure, forms a complex with SGS1 and TOP3.

It is found in the cytoplasm. The protein resides in the nucleus. Functionally, structure-specific DNA-binding protein with a preference for cruciform structures. Also binds single-stranded DNA (ssDNA). Functions together with SGS1 and TOP3 to maintain genome integrity. Essential for proper meiotic cell division. Required for normal S-phase progression and DNA damage response. Required for resistance to the DNA-damaging agent methyl methanesulfonate (MMS). In Saccharomyces cerevisiae (strain ATCC 204508 / S288c) (Baker's yeast), this protein is RecQ-mediated genome instability protein 1.